A 113-amino-acid chain; its full sequence is Death-associated protein-like 1.S (113 aa).

Residues 1 to 53 form a disordered region; it reads MTKELKVQSSPQALKAGHLPAVKAGGMRVSKKQGNDENSAPEKNAKKTLQEKP.

The protein belongs to the DAP-DAPL1 family. Associates with ribosomes; preventing translation. Interacts with eiF5a (eif5a and eif5a2); preventing translation.

Functionally, ribosome-binding protein that promotes ribosome hibernation, a process during which ribosomes are stabilized in an inactive state and preserved from proteasomal degradation. Acts via its association with eiF5a (eif5a and eif5a2) at the polypeptide exit tunnel of the ribosome, preventing mRNA translation. Plays a key role in ribosome hibernation in the mature egg by preventing mRNA translation, leading to ribosome inactivation. Ribosomes, which are produced in large quantities during oogenesis, are stored and translationally repressed in the egg and early embryo. This chain is Death-associated protein-like 1.S (dapl1.S), found in Xenopus laevis (African clawed frog).